A 552-amino-acid chain; its full sequence is Formate--tetrahydrofolate ligase (552 aa).

An ATP-binding site is contributed by 65–72 (TPAGEGKT).

It belongs to the formate--tetrahydrofolate ligase family.

It catalyses the reaction (6S)-5,6,7,8-tetrahydrofolate + formate + ATP = (6R)-10-formyltetrahydrofolate + ADP + phosphate. The protein operates within one-carbon metabolism; tetrahydrofolate interconversion. The protein is Formate--tetrahydrofolate ligase of Fervidobacterium nodosum (strain ATCC 35602 / DSM 5306 / Rt17-B1).